A 253-amino-acid chain; its full sequence is uncharacterized protein (253 aa).

This is an uncharacterized protein from Mycoplasma pneumoniae (strain ATCC 29342 / M129 / Subtype 1) (Mycoplasmoides pneumoniae).